We begin with the raw amino-acid sequence, 118 residues long: Vesicle-associated membrane protein 1 (118 aa).

Positions 1–15 (MSAPAQPPTEGAEGA) are enriched in low complexity. Positions 1-36 (MSAPAQPPTEGAEGAAPGGGPPGPPPNMTSNRRLQQ) are disordered. Residues 1–96 (MSAPAQPPTE…KRKYWWKNCK (96 aa)) are Cytoplasmic-facing. The region spanning 33–93 (RLQQTQAQVE…AKLKRKYWWK (61 aa)) is the v-SNARE coiled-coil homology domain. S63 carries the phosphoserine modification. Residues 97–116 (MMIMLGAICAIIVVVIVIYF) form a helical; Anchor for type IV membrane protein membrane-spanning segment. Topologically, residues 117 to 118 (FA) are vesicular.

The protein belongs to the synaptobrevin family. As to quaternary structure, interacts with VAPA and VAPB.

It localises to the cytoplasmic vesicle. The protein resides in the secretory vesicle. It is found in the synaptic vesicle membrane. The protein localises to the synapse. Its subcellular location is the synaptosome. It localises to the cytoplasmic vesicle membrane. Its function is as follows. Involved in the targeting and/or fusion of transport vesicles to their target membrane. The chain is Vesicle-associated membrane protein 1 (VAMP1) from Bos taurus (Bovine).